The following is a 146-amino-acid chain: Snaclec anticoagulant protein subunit B (146 aa).

The first 23 residues, 1–23 (MGRFIFVSFGLLVLFLSLSGTAA), serve as a signal peptide directing secretion. In terms of domain architecture, C-type lectin spans 24–146 (DCPSDWSSYE…IANFVCEFQA (123 aa)). 3 disulfide bridges follow: C25/C36, C53/C142, and C119/C134. S64, Q66, and E70 together coordinate Ca(2+). Position 143 (E143) interacts with Ca(2+).

Belongs to the snaclec family. As to quaternary structure, heterodimer with subunit A of agkisacutacin or AaACP; disulfide-linked. In terms of tissue distribution, expressed by the venom gland.

It localises to the secreted. Its function is as follows. Anticoagulant protein which binds to the gamma-carboxyglutamic acid-domain regions of factors IX and factor X in the presence of calcium with a 1 to 1 stoichiometry. Also inhibits platelet aggregation by binding to platelet glycoprotein Ibalpha (GP1BA) and functioning as a blocker of vWF. Is devoid of hemorrhagic and lethal activities. Possesses antithrombotic and thrombolytic activities. Also hydrolyzes the Aalpha-chain of fibrinogen. Does not affect the Bbeta-chain and the gamma chain. The sequence is that of Snaclec anticoagulant protein subunit B from Deinagkistrodon acutus (Hundred-pace snake).